The primary structure comprises 157 residues: Transcription elongation factor GreA (157 aa).

Residues 25–43 are compositionally biased toward basic and acidic residues; the sequence is EGRAKVAEQLSEARDKGDL. The interval 25-47 is disordered; sequence EGRAKVAEQLSEARDKGDLSENA. Residues 43-79 adopt a coiled-coil conformation; the sequence is LSENAEYDAAKEAQEILERRIAKLEELMINARVINKD.

The protein belongs to the GreA/GreB family.

Functionally, necessary for efficient RNA polymerase transcription elongation past template-encoded arresting sites. The arresting sites in DNA have the property of trapping a certain fraction of elongating RNA polymerases that pass through, resulting in locked ternary complexes. Cleavage of the nascent transcript by cleavage factors such as GreA or GreB allows the resumption of elongation from the new 3'terminus. GreA releases sequences of 2 to 3 nucleotides. This chain is Transcription elongation factor GreA, found in Amoebophilus asiaticus (strain 5a2).